A 247-amino-acid chain; its full sequence is Small ribosomal subunit protein uS3 (247 aa).

A KH type-2 domain is found at 51-119 (VAKRDKRPAG…ELHLNIVEIR (69 aa)). Residues 224–233 (PSAHDRRQQE) are compositionally biased toward basic and acidic residues. The disordered stretch occupies residues 224-247 (PSAHDRRQQELQESGGASRPRRDR).

This sequence belongs to the universal ribosomal protein uS3 family. In terms of assembly, part of the 30S ribosomal subunit. Forms a tight complex with proteins S10 and S14.

Binds the lower part of the 30S subunit head. Binds mRNA in the 70S ribosome, positioning it for translation. The sequence is that of Small ribosomal subunit protein uS3 from Jannaschia sp. (strain CCS1).